We begin with the raw amino-acid sequence, 264 residues long: Protein FAM228B (264 aa).

This sequence belongs to the FAM228 family.

The protein is Protein FAM228B (FAM228B) of Bos taurus (Bovine).